Consider the following 1925-residue polypeptide: Plexin-D1 (1925 aa).

A compositionally biased stretch (low complexity) spans 1–21; that stretch reads MARRAAGGAPPSARAAAAVPL. A disordered region spans residues 1–26; that stretch reads MARRAAGGAPPSARAAAAVPLRPRPH. A signal peptide spans 1-48; sequence MARRAAGGAPPSARAAAAVPLRPRPHSRGPGLLPLPLLLLLGAARAGA. Residues 49–548 enclose the Sema domain; that stretch reads LEIQRRFPSP…TSHQMARVKV (500 aa). Residues 49–1271 are Extracellular-facing; sequence LEIQRRFPSP…TLQLGGSETA (1223 aa). Intrachain disulfides connect cysteine 106-cysteine 116 and cysteine 142-cysteine 150. 2 N-linked (GlcNAc...) asparagine glycosylation sites follow: asparagine 157 and asparagine 226. Disulfide bonds link cysteine 324–cysteine 447 and cysteine 347–cysteine 391. A glycan (N-linked (GlcNAc...) asparagine) is linked at asparagine 483. 5 disulfide bridges follow: cysteine 551-cysteine 568, cysteine 557-cysteine 602, cysteine 560-cysteine 577, cysteine 571-cysteine 583, and cysteine 639-cysteine 663. 3 consecutive IPT/TIG domains span residues 893 to 977, 983 to 1065, and 1071 to 1145; these read PEIR…SREQ, PTVH…NLTF, and PVIT…FING. An N-linked (GlcNAc...) asparagine glycan is attached at asparagine 967. An N-linked (GlcNAc...) asparagine glycan is attached at asparagine 1120. A helical membrane pass occupies residues 1272–1292; sequence IVVSIVICSVLLLLSVVALFV. Residues 1293 to 1925 are Cytoplasmic-facing; that stretch reads FCTKSRRAER…NNIYECYSEA (633 aa).

The protein belongs to the plexin family. Interacts with NRP1 and SEMA4A. Interacts with SH3BP1; they dissociate upon SEMA3E binding to PLXND1 allowing SH3BP1 to transduce downstream signal through RAC1 inactivation. Detected in embryonic heart and vascular endothelium, brain, dorsal root ganglia, adrenal gland, lung mesenchyme, small intestine and in the ossification centers of vertebral bodies.

Its subcellular location is the cell membrane. It localises to the cell projection. The protein resides in the lamellipodium membrane. Functionally, cell surface receptor for SEMA4A and for class 3 semaphorins, such as SEMA3A, SEMA3C and SEMA3E. Plays an important role in cell-cell signaling, and in regulating the migration of a wide spectrum of cell types. Regulates the migration of thymocytes in the medulla. Regulates endothelial cell migration. Plays an important role in ensuring the specificity of synapse formation. Mediates anti-angiogenic signaling in response to SEMA3E. Required for normal development of the heart and vasculature. The chain is Plexin-D1 (Plxnd1) from Mus musculus (Mouse).